A 165-amino-acid polypeptide reads, in one-letter code: MRIGHGFDVHKFGGEGPLVIGGVRIPYTQGLLAHSDGDVVLHAVTDALLGAAALGDIGKLFPDTDPAFKGADSRGLLREAWRRINDKGYQLGNLDVTIIAQAPKMAPHIPQMRVNLAEDLQCHMDDVNVKATTTEQLGFTGRGEGIACEAVALLVKKETGEIVAW.

The a divalent metal cation site is built by Asp-8 and His-10. 4-CDP-2-C-methyl-D-erythritol 2-phosphate contacts are provided by residues 8–10 (DVH) and 34–35 (HS). His-42 provides a ligand contact to a divalent metal cation. 4-CDP-2-C-methyl-D-erythritol 2-phosphate is bound by residues 56-58 (DIG), 61-65 (FPDTD), 100-106 (AQAPKMA), 132-135 (TTTE), Phe-139, and Arg-142.

The protein belongs to the IspF family. In terms of assembly, homotrimer. Requires a divalent metal cation as cofactor.

It carries out the reaction 4-CDP-2-C-methyl-D-erythritol 2-phosphate = 2-C-methyl-D-erythritol 2,4-cyclic diphosphate + CMP. The protein operates within isoprenoid biosynthesis; isopentenyl diphosphate biosynthesis via DXP pathway; isopentenyl diphosphate from 1-deoxy-D-xylulose 5-phosphate: step 4/6. In terms of biological role, involved in the biosynthesis of isopentenyl diphosphate (IPP) and dimethylallyl diphosphate (DMAPP), two major building blocks of isoprenoid compounds. Catalyzes the conversion of 4-diphosphocytidyl-2-C-methyl-D-erythritol 2-phosphate (CDP-ME2P) to 2-C-methyl-D-erythritol 2,4-cyclodiphosphate (ME-CPP) with a corresponding release of cytidine 5-monophosphate (CMP). This is 2-C-methyl-D-erythritol 2,4-cyclodiphosphate synthase from Pectobacterium atrosepticum (strain SCRI 1043 / ATCC BAA-672) (Erwinia carotovora subsp. atroseptica).